Reading from the N-terminus, the 88-residue chain is Putative membrane protein insertion efficiency factor (88 aa).

Positions 64-88 are disordered; sequence GVDPVPKKSSSKKTSSTTACGCGHS.

This sequence belongs to the UPF0161 family.

The protein resides in the cell inner membrane. Could be involved in insertion of integral membrane proteins into the membrane. The sequence is that of Putative membrane protein insertion efficiency factor from Herminiimonas arsenicoxydans.